Consider the following 397-residue polypeptide: Phosphoglycerate kinase (397 aa).

Residues 21–23 (DVN), arginine 36, 59–62 (HFGR), arginine 119, and arginine 152 each bind substrate. Residues lysine 202, glutamate 324, and 354–357 (GGDT) each bind ATP.

Belongs to the phosphoglycerate kinase family. As to quaternary structure, monomer.

The protein localises to the cytoplasm. The catalysed reaction is (2R)-3-phosphoglycerate + ATP = (2R)-3-phospho-glyceroyl phosphate + ADP. It participates in carbohydrate degradation; glycolysis; pyruvate from D-glyceraldehyde 3-phosphate: step 2/5. This chain is Phosphoglycerate kinase, found in Cereibacter sphaeroides (strain ATCC 17025 / ATH 2.4.3) (Rhodobacter sphaeroides).